An 81-amino-acid polypeptide reads, in one-letter code: ATP synthase subunit c, chloroplastic (81 aa).

Helical transmembrane passes span 3–23 and 57–77; these read PLIP…ASIG and LAFM…LLFA.

Belongs to the ATPase C chain family. In terms of assembly, F-type ATPases have 2 components, F(1) - the catalytic core - and F(0) - the membrane proton channel. F(1) has five subunits: alpha(3), beta(3), gamma(1), delta(1), epsilon(1). F(0) has four main subunits: a(1), b(1), b'(1) and c(10-14). The alpha and beta chains form an alternating ring which encloses part of the gamma chain. F(1) is attached to F(0) by a central stalk formed by the gamma and epsilon chains, while a peripheral stalk is formed by the delta, b and b' chains.

The protein resides in the plastid. It localises to the chloroplast thylakoid membrane. Functionally, f(1)F(0) ATP synthase produces ATP from ADP in the presence of a proton or sodium gradient. F-type ATPases consist of two structural domains, F(1) containing the extramembraneous catalytic core and F(0) containing the membrane proton channel, linked together by a central stalk and a peripheral stalk. During catalysis, ATP synthesis in the catalytic domain of F(1) is coupled via a rotary mechanism of the central stalk subunits to proton translocation. Its function is as follows. Key component of the F(0) channel; it plays a direct role in translocation across the membrane. A homomeric c-ring of between 10-14 subunits forms the central stalk rotor element with the F(1) delta and epsilon subunits. This chain is ATP synthase subunit c, chloroplastic, found in Cycas taitungensis (Prince sago).